The following is a 338-amino-acid chain: Ketol-acid reductoisomerase (NADP(+)) (338 aa).

The KARI N-terminal Rossmann domain occupies 1 to 181 (MKVFYDKDCD…GGGRAGIIET (181 aa)). NADP(+) is bound by residues 24–27 (YGSQ), R47, and S52. Residue H107 is part of the active site. Residue G133 participates in NADP(+) binding. A KARI C-terminal knotted domain is found at 182 to 327 (DFREETETDL…GKLRAMMPWI (146 aa)). 4 residues coordinate Mg(2+): D190, E194, E226, and E230. S251 provides a ligand contact to substrate.

It belongs to the ketol-acid reductoisomerase family. Mg(2+) serves as cofactor.

The enzyme catalyses (2R)-2,3-dihydroxy-3-methylbutanoate + NADP(+) = (2S)-2-acetolactate + NADPH + H(+). It catalyses the reaction (2R,3R)-2,3-dihydroxy-3-methylpentanoate + NADP(+) = (S)-2-ethyl-2-hydroxy-3-oxobutanoate + NADPH + H(+). It participates in amino-acid biosynthesis; L-isoleucine biosynthesis; L-isoleucine from 2-oxobutanoate: step 2/4. It functions in the pathway amino-acid biosynthesis; L-valine biosynthesis; L-valine from pyruvate: step 2/4. Its function is as follows. Involved in the biosynthesis of branched-chain amino acids (BCAA). Catalyzes an alkyl-migration followed by a ketol-acid reduction of (S)-2-acetolactate (S2AL) to yield (R)-2,3-dihydroxy-isovalerate. In the isomerase reaction, S2AL is rearranged via a Mg-dependent methyl migration to produce 3-hydroxy-3-methyl-2-ketobutyrate (HMKB). In the reductase reaction, this 2-ketoacid undergoes a metal-dependent reduction by NADPH to yield (R)-2,3-dihydroxy-isovalerate. The protein is Ketol-acid reductoisomerase (NADP(+)) of Bordetella petrii (strain ATCC BAA-461 / DSM 12804 / CCUG 43448).